Consider the following 68-residue polypeptide: Metallothionein-3 (68 aa).

N-acetylmethionine is present on methionine 1. The interval 1-30 is beta; that stretch reads MDPETCPCPSGGSCTCADSCKCEGCKCTSC. A divalent metal cation contacts are provided by cysteine 6, cysteine 8, cysteine 14, cysteine 16, cysteine 20, cysteine 22, cysteine 25, cysteine 27, and cysteine 30. The interval 31–68 is alpha; that stretch reads KKSCCSCCPAECEKCAKDCVCKGGEAAEAEAEKCSCCQ. Serine 33 bears the Phosphoserine mark. The a divalent metal cation site is built by cysteine 34, cysteine 35, cysteine 37, cysteine 38, cysteine 42, cysteine 45, cysteine 49, cysteine 51, cysteine 64, cysteine 66, and cysteine 67.

It belongs to the metallothionein superfamily. Type 1 family. As to expression, abundant in a subset of astrocytes in the normal human brain, but greatly reduced in the Alzheimer disease (AD) brain.

In terms of biological role, binds heavy metals. Contains three zinc and three copper atoms per polypeptide chain and only a negligible amount of cadmium. Inhibits survival and neurite formation of cortical neurons in vitro. This Homo sapiens (Human) protein is Metallothionein-3 (MT3).